The chain runs to 136 residues: MSALVYFSSSSENTHRFMQRLGLPATRIPLNERERIQVDEPYILVVPSYGGGGMAGAVPRQVIRFLNDEHNRARIRGVIASGNRNFGDAWGCAGDVIAQKCGVPWLYRFELMGTQRDIDNVRKGVNEFWQQLPRSA.

Belongs to the NrdI family.

Functionally, probably involved in ribonucleotide reductase function. This chain is Protein NrdI, found in Salmonella agona (strain SL483).